Consider the following 106-residue polypeptide: Large ribosomal subunit protein eL42Q (106 aa).

It belongs to the eukaryotic ribosomal protein eL42 family.

The polypeptide is Large ribosomal subunit protein eL42Q (RIM-C) (Candida maltosa (Yeast)).